The chain runs to 176 residues: Translation initiation factor IF-3 (176 aa).

Belongs to the IF-3 family. Monomer.

It is found in the cytoplasm. In terms of biological role, IF-3 binds to the 30S ribosomal subunit and shifts the equilibrium between 70S ribosomes and their 50S and 30S subunits in favor of the free subunits, thus enhancing the availability of 30S subunits on which protein synthesis initiation begins. This Streptococcus pyogenes serotype M18 (strain MGAS8232) protein is Translation initiation factor IF-3.